The chain runs to 327 residues: Methionyl-tRNA formyltransferase (327 aa).

121–124 (SLLP) lines the (6S)-5,6,7,8-tetrahydrofolate pocket.

It belongs to the Fmt family.

The catalysed reaction is L-methionyl-tRNA(fMet) + (6R)-10-formyltetrahydrofolate = N-formyl-L-methionyl-tRNA(fMet) + (6S)-5,6,7,8-tetrahydrofolate + H(+). In terms of biological role, attaches a formyl group to the free amino group of methionyl-tRNA(fMet). The formyl group appears to play a dual role in the initiator identity of N-formylmethionyl-tRNA by promoting its recognition by IF2 and preventing the misappropriation of this tRNA by the elongation apparatus. This chain is Methionyl-tRNA formyltransferase, found in Burkholderia mallei (strain ATCC 23344).